Consider the following 944-residue polypeptide: Isoleucine--tRNA ligase (944 aa).

A 'HIGH' region motif is present at residues 58-68; sequence PYANGSIHIGH. Residue Glu563 participates in L-isoleucyl-5'-AMP binding. The short motif at 604–608 is the 'KMSKS' region element; the sequence is KMSKS. Lys607 lines the ATP pocket. 4 residues coordinate Zn(2+): Cys907, Cys910, Cys927, and Cys930.

This sequence belongs to the class-I aminoacyl-tRNA synthetase family. IleS type 1 subfamily. Monomer. Zn(2+) serves as cofactor.

The protein localises to the cytoplasm. The catalysed reaction is tRNA(Ile) + L-isoleucine + ATP = L-isoleucyl-tRNA(Ile) + AMP + diphosphate. In terms of biological role, catalyzes the attachment of isoleucine to tRNA(Ile). As IleRS can inadvertently accommodate and process structurally similar amino acids such as valine, to avoid such errors it has two additional distinct tRNA(Ile)-dependent editing activities. One activity is designated as 'pretransfer' editing and involves the hydrolysis of activated Val-AMP. The other activity is designated 'posttransfer' editing and involves deacylation of mischarged Val-tRNA(Ile). In Salmonella typhimurium (strain LT2 / SGSC1412 / ATCC 700720), this protein is Isoleucine--tRNA ligase.